We begin with the raw amino-acid sequence, 307 residues long: Tyrosine recombinase XerC (307 aa).

Residues 9–95 form the Core-binding (CB) domain; it reads ETLSLAIDSF…ALRSFLDWQV (87 aa). Residues 116 to 296 form the Tyr recombinase domain; the sequence is HLPKNMDVDE…DFQHLAKVYD (181 aa). Catalysis depends on residues Arg-155, Lys-179, His-248, Arg-251, and His-274. Tyr-283 serves as the catalytic O-(3'-phospho-DNA)-tyrosine intermediate.

The protein belongs to the 'phage' integrase family. XerC subfamily. In terms of assembly, forms a cyclic heterotetrameric complex composed of two molecules of XerC and two molecules of XerD, in which XerC interacts with XerD via its C-terminal region, XerD interacts with XerC via its C-terminal region and so on.

The protein resides in the cytoplasm. With respect to regulation, ftsK may regulate the catalytic switch between XerC and XerD in the heterotetrameric complex during the two steps of the recombination process. Site-specific tyrosine recombinase, which acts by catalyzing the cutting and rejoining of the recombining DNA molecules. Binds cooperatively to specific DNA consensus sequences that are separated from XerD binding sites by a short central region, forming the heterotetrameric XerC-XerD complex that recombines DNA substrates. The complex is essential to convert dimers of the bacterial chromosome into monomers to permit their segregation at cell division. It also contributes to the segregational stability of plasmids. In the complex XerC specifically exchanges the top DNA strands. The protein is Tyrosine recombinase XerC of Proteus mirabilis.